A 505-amino-acid polypeptide reads, in one-letter code: Beta-glucosidase 3 (505 aa).

A signal peptide spans 1-22 (MAAAAAFFCALLFISVQHGVLG). Residues Q43 and H143 each contribute to the a beta-D-glucoside site. The Proton donor role is filled by E189. A disulfide bond links C208 and C217. A glycan (N-linked (GlcNAc...) asparagine) is linked at N221. A beta-D-glucoside-binding residues include Y333 and E405. E405 acts as the Nucleophile in catalysis. 2 N-linked (GlcNAc...) asparagine glycosylation sites follow: N415 and N436. Residues W450 and Y466 each coordinate a beta-D-glucoside.

The protein belongs to the glycosyl hydrolase 1 family.

It catalyses the reaction Hydrolysis of terminal, non-reducing beta-D-glucosyl residues with release of beta-D-glucose.. This chain is Beta-glucosidase 3 (BGLU3), found in Oryza sativa subsp. japonica (Rice).